A 360-amino-acid polypeptide reads, in one-letter code: MSRQRCALVMAGGTGGHIFPGLAVAEALRERGWRVHWLGGKGSAARPSMESQLVPPRGFSFETIDFSGVRGKGPVTLALLPLRLLKAFWQSVQVIRRVKPDVVVGLGGYIAFPAGMMSVLLGKPLVLHEQNSVAGMVNKVLASVADRVFTAFPDVLKKAEWVGNPLRPAFTRQLDPAVRFAQRRGPLKLLVVGGSLGATALNELVPKALALIPAASRPQVIHQSGARQLEALRANYQAAGVNAELTPFIEDTAQAFADADLIICRAGASTVTEIAAVGAAALFVPFPSAVDDHQTVNAKFLVAHGGGWLVQQRDLTPSILATMLQKTERLALVQSALQAKTMQKIDATSHLVAACEELAP.

Residues 14–16 (TGG), Asn131, Arg167, Ser195, Ile249, and Gln294 contribute to the UDP-N-acetyl-alpha-D-glucosamine site.

The protein belongs to the glycosyltransferase 28 family. MurG subfamily.

The protein resides in the cell inner membrane. It catalyses the reaction di-trans,octa-cis-undecaprenyl diphospho-N-acetyl-alpha-D-muramoyl-L-alanyl-D-glutamyl-meso-2,6-diaminopimeloyl-D-alanyl-D-alanine + UDP-N-acetyl-alpha-D-glucosamine = di-trans,octa-cis-undecaprenyl diphospho-[N-acetyl-alpha-D-glucosaminyl-(1-&gt;4)]-N-acetyl-alpha-D-muramoyl-L-alanyl-D-glutamyl-meso-2,6-diaminopimeloyl-D-alanyl-D-alanine + UDP + H(+). Its pathway is cell wall biogenesis; peptidoglycan biosynthesis. Cell wall formation. Catalyzes the transfer of a GlcNAc subunit on undecaprenyl-pyrophosphoryl-MurNAc-pentapeptide (lipid intermediate I) to form undecaprenyl-pyrophosphoryl-MurNAc-(pentapeptide)GlcNAc (lipid intermediate II). The polypeptide is UDP-N-acetylglucosamine--N-acetylmuramyl-(pentapeptide) pyrophosphoryl-undecaprenol N-acetylglucosamine transferase (Polaromonas naphthalenivorans (strain CJ2)).